The primary structure comprises 406 residues: Peptidase T (406 aa).

Residue H81 participates in Zn(2+) binding. D83 is an active-site residue. D142 lines the Zn(2+) pocket. E176 (proton acceptor) is an active-site residue. Residues E177, D199, and H381 each contribute to the Zn(2+) site.

The protein belongs to the peptidase M20B family. It depends on Zn(2+) as a cofactor.

The protein localises to the cytoplasm. The enzyme catalyses Release of the N-terminal residue from a tripeptide.. Cleaves the N-terminal amino acid of tripeptides. The polypeptide is Peptidase T (Streptococcus suis (strain 98HAH33)).